The primary structure comprises 399 residues: Acetate kinase (399 aa).

Asn-7 contacts Mg(2+). Residue Lys-14 coordinates ATP. Arg-91 serves as a coordination point for substrate. The active-site Proton donor/acceptor is Asp-148. ATP contacts are provided by residues 208–212 (HLGNG), 283–285 (DFR), and 331–335 (GLGEN). Glu-384 provides a ligand contact to Mg(2+).

Belongs to the acetokinase family. Homodimer. It depends on Mg(2+) as a cofactor. Requires Mn(2+) as cofactor.

The protein localises to the cytoplasm. The enzyme catalyses acetate + ATP = acetyl phosphate + ADP. The protein operates within metabolic intermediate biosynthesis; acetyl-CoA biosynthesis; acetyl-CoA from acetate: step 1/2. Catalyzes the formation of acetyl phosphate from acetate and ATP. Can also catalyze the reverse reaction. This chain is Acetate kinase, found in Desulfitobacterium hafniense (strain Y51).